The sequence spans 313 residues: Ribosomal RNA small subunit methyltransferase H (313 aa).

S-adenosyl-L-methionine contacts are provided by residues 35-37 (GGH), Asp55, Phe81, Asp103, and Gln110.

The protein belongs to the methyltransferase superfamily. RsmH family.

The protein resides in the cytoplasm. The catalysed reaction is cytidine(1402) in 16S rRNA + S-adenosyl-L-methionine = N(4)-methylcytidine(1402) in 16S rRNA + S-adenosyl-L-homocysteine + H(+). Specifically methylates the N4 position of cytidine in position 1402 (C1402) of 16S rRNA. In Pseudomonas aeruginosa (strain ATCC 15692 / DSM 22644 / CIP 104116 / JCM 14847 / LMG 12228 / 1C / PRS 101 / PAO1), this protein is Ribosomal RNA small subunit methyltransferase H.